A 146-amino-acid chain; its full sequence is 3-hydroxyacyl-[acyl-carrier-protein] dehydratase FabZ (146 aa).

Histidine 49 is a catalytic residue.

It belongs to the thioester dehydratase family. FabZ subfamily.

It is found in the cytoplasm. It carries out the reaction a (3R)-hydroxyacyl-[ACP] = a (2E)-enoyl-[ACP] + H2O. Its function is as follows. Involved in unsaturated fatty acids biosynthesis. Catalyzes the dehydration of short chain beta-hydroxyacyl-ACPs and long chain saturated and unsaturated beta-hydroxyacyl-ACPs. The sequence is that of 3-hydroxyacyl-[acyl-carrier-protein] dehydratase FabZ from Azotobacter vinelandii (strain DJ / ATCC BAA-1303).